Here is a 109-residue protein sequence, read N- to C-terminus: Spermidine export protein MdtI (109 aa).

4 helical membrane-spanning segments follow: residues 6 to 26 (WIHAAWLAFAIVLEIIANVFL), 36 to 56 (WFGLLSIAAVLGAFSALSQAV), 64 to 84 (AYALWGGFGIAATLAAGWVLF), and 88 to 108 (LNRKGWIGLVLLLAGMVMIKL).

The protein belongs to the drug/metabolite transporter (DMT) superfamily. Small multidrug resistance (SMR) (TC 2.A.7.1) family. MdtI subfamily. In terms of assembly, forms a complex with MdtJ.

It localises to the cell inner membrane. In terms of biological role, catalyzes the excretion of spermidine. The sequence is that of Spermidine export protein MdtI from Enterobacter sp. (strain 638).